Reading from the N-terminus, the 130-residue chain is Metastasis-suppressor KiSS-1 (130 aa).

Residues 1 to 19 (MISMASWQLLLLLCVATYG) form the signal peptide. Residues 49 to 82 (KESRYAESKPGSAGLRARRSSPCPPVEGPAGRQR) form a disordered region. Residues Cys71 and Cys85 are joined by a disulfide bond. Residue Tyr110 is modified to Phosphotyrosine. Residues 110–119 (YNWNSFGLRY) are essential for receptor binding and receptor activation. Tyrosine amide is present on Tyr119.

Belongs to the KISS1 family. Weak in all tissue types with highest levels in lung and 15- 17-day embryos. Expressed in areas of the hypothalamus implicated in the neuroendocrine regulation of gonadotropin secretion, including the anteroventral periventricular nucleus, the periventricular nucleus, and the arcuate nucleus.

It localises to the secreted. Functionally, metastasis suppressor protein. May regulate events downstream of cell-matrix adhesion, perhaps involving cytoskeletal reorganization. Generates a C-terminally amidated peptide, metastin which functions as the endogenous ligand of the G-protein coupled receptor GPR54. Activation of the receptor inhibits cell proliferation and cell migration, key characteristics of tumor metastasis. The receptor is also essential for normal gonadotropin-released hormone physiology and for puberty. The hypothalamic KiSS1/GPR54 system is a pivotal factor in central regulation of the gonadotropic axis at puberty and in adulthood. Intracerebroventricular administration induces an increase in serum LH and FSH levels in prepubertal male and female as well as in adult animals. This chain is Metastasis-suppressor KiSS-1 (Kiss1), found in Mus musculus (Mouse).